The chain runs to 122 residues: Holo-[acyl-carrier-protein] synthase (122 aa).

Positions 9 and 58 each coordinate Mg(2+).

It belongs to the P-Pant transferase superfamily. AcpS family. Mg(2+) serves as cofactor.

The protein localises to the cytoplasm. It carries out the reaction apo-[ACP] + CoA = holo-[ACP] + adenosine 3',5'-bisphosphate + H(+). Functionally, transfers the 4'-phosphopantetheine moiety from coenzyme A to a Ser of acyl-carrier-protein. In Chlamydia caviae (strain ATCC VR-813 / DSM 19441 / 03DC25 / GPIC) (Chlamydophila caviae), this protein is Holo-[acyl-carrier-protein] synthase.